The following is a 146-amino-acid chain: MMDINEIREYLPHRYPFLLVDRVVDLDVEGKQIRAYKNVSINEPFFNGHFPEHPIMPGVLIIEAMAQAAGILGFKMMGVKPADGTLYYFVGSDKLRFRSPVLPGDQLTLEAKYLSDRRSIWKFECRATVDGKEVCSAEIICAERKL.

The active site involves His49.

It belongs to the thioester dehydratase family. FabZ subfamily.

It is found in the cytoplasm. It catalyses the reaction a (3R)-hydroxyacyl-[ACP] = a (2E)-enoyl-[ACP] + H2O. Involved in unsaturated fatty acids biosynthesis. Catalyzes the dehydration of short chain beta-hydroxyacyl-ACPs and long chain saturated and unsaturated beta-hydroxyacyl-ACPs. This chain is 3-hydroxyacyl-[acyl-carrier-protein] dehydratase FabZ, found in Ectopseudomonas mendocina (strain ymp) (Pseudomonas mendocina).